We begin with the raw amino-acid sequence, 362 residues long: 3-ketodihydrosphingosine reductase gsl-3 (362 aa).

Position 55 (L55) interacts with NADP(+). NADPH contacts are provided by G58, S60, G62, and R83. Positions 58-62 (GASEG) match the GXSXG motif. NADP(+) is bound at residue N84. Residues R87 and D113 each contribute to the NADPH site. 6 residues coordinate NADP(+): D113, R176, Y216, K220, I252, and S254. The active-site Proton acceptor is the Y216. The active-site Lowers pKa of active site Tyr is the K220. A helical transmembrane segment spans residues 318–338 (NNWVLDTLMGWLIPIIYFFVL).

Belongs to the short-chain dehydrogenases/reductases (SDR) family.

It localises to the endoplasmic reticulum membrane. It catalyses the reaction sphinganine + NADP(+) = 3-oxosphinganine + NADPH + H(+). Its pathway is lipid metabolism; sphingolipid metabolism. Its function is as follows. Catalyzes the reduction of 3'-oxosphinganine (3-ketodihydrosphingosine/KDS) to sphinganine (dihydrosphingosine/DHS), the second step of de novo sphingolipid biosynthesis. The chain is 3-ketodihydrosphingosine reductase gsl-3 (gsl-3) from Neurospora crassa (strain ATCC 24698 / 74-OR23-1A / CBS 708.71 / DSM 1257 / FGSC 987).